Reading from the N-terminus, the 425-residue chain is MTRLDSVERAVADIGAGKAVIVIDDEDRENEGDLIFAAEKATPELVAFMVRYTSGYLCVPLDGAVCDRLGLLPMYAVNQDKHGTAYTVTVDAKNGVGTGISASDRATTMRLLADPASVAEDFTRPGHVVPLRAKDGGVLRRPGHTEAAVDLARMAGLQPAGAICEIVSRKDEGSMAQTDELRVFADEHGLALITIADLIEWRRKHEKHIERVAEARIPTRRGEFRAIGYTSIYENVEHVALVRGEIAGPNSDGDDVLVRVHSECLTGDVFGSRRCDCGSQLDAAMAMVAREGRGVVLYMRGHEGRGIGLLHKLQTYQLQDAGDDTVDANLKLGLPADARDYGIGAQILVDLGVRSMRLLTNNPAKRVGLDGYGLHIIERVPLPVRANAENIRYLMTKRDRMGHDLTGLDDFHESVHLPGEFGGAL.

Positions 1–204 (MTRLDSVERA…IADLIEWRRK (204 aa)) are DHBP synthase. D-ribulose 5-phosphate is bound by residues 28 to 29 (RE), D33, 141 to 145 (RPGHT), and E165. E29 provides a ligand contact to Mg(2+). Residue H144 participates in Mg(2+) binding. A GTP cyclohydrolase II region spans residues 205-425 (HEKHIERVAE…HLPGEFGGAL (221 aa)). 259–263 (RVHSE) contacts GTP. 3 residues coordinate Zn(2+): C264, C275, and C277. Residues Q280, 303–305 (EGR), and T325 each bind GTP. The Proton acceptor; for GTP cyclohydrolase activity role is filled by D337. Residue R339 is the Nucleophile; for GTP cyclohydrolase activity of the active site. Residues T360 and K365 each contribute to the GTP site.

It in the N-terminal section; belongs to the DHBP synthase family. The protein in the C-terminal section; belongs to the GTP cyclohydrolase II family. Mg(2+) is required as a cofactor. The cofactor is Mn(2+). Zn(2+) serves as cofactor.

It carries out the reaction D-ribulose 5-phosphate = (2S)-2-hydroxy-3-oxobutyl phosphate + formate + H(+). The enzyme catalyses GTP + 4 H2O = 2,5-diamino-6-hydroxy-4-(5-phosphoribosylamino)-pyrimidine + formate + 2 phosphate + 3 H(+). It participates in cofactor biosynthesis; riboflavin biosynthesis; 2-hydroxy-3-oxobutyl phosphate from D-ribulose 5-phosphate: step 1/1. It functions in the pathway cofactor biosynthesis; riboflavin biosynthesis; 5-amino-6-(D-ribitylamino)uracil from GTP: step 1/4. In terms of biological role, catalyzes the conversion of D-ribulose 5-phosphate to formate and 3,4-dihydroxy-2-butanone 4-phosphate. Functionally, catalyzes the conversion of GTP to 2,5-diamino-6-ribosylamino-4(3H)-pyrimidinone 5'-phosphate (DARP), formate and pyrophosphate. In Mycobacterium ulcerans (strain Agy99), this protein is Riboflavin biosynthesis protein RibBA.